The following is a 290-amino-acid chain: Putative speedy protein-like protein 3 (290 aa).

The tract at residues 16 to 50 (GVDPSPPCRSLGWKRKKEWSDESEEEPEKELAPEP) is disordered. Positions 36-50 (DESEEEPEKELAPEP) are enriched in acidic residues.

This sequence belongs to the Speedy/Ringo family.

This chain is Putative speedy protein-like protein 3, found in Homo sapiens (Human).